Reading from the N-terminus, the 484-residue chain is D-aminoacylase (484 aa).

The protein belongs to the metallo-dependent hydrolases superfamily. N-acyl-D-amino-acid deacylase family. It depends on Zn(2+) as a cofactor.

It localises to the cytoplasm. It catalyses the reaction an N-acyl-D-amino acid + H2O = a D-alpha-amino acid + a carboxylate. In terms of biological role, has a wide specificity; hydrolyzes N-acyl derivative of neutral D-amino acids. The protein is D-aminoacylase (dan) of Alcaligenes xylosoxydans xylosoxydans (Achromobacter xylosoxidans).